We begin with the raw amino-acid sequence, 203 residues long: Histidine biosynthesis bifunctional protein HisIE (203 aa).

The interval 1 to 114 (MLTEQQRREL…FGDTAHQWLF (114 aa)) is phosphoribosyl-AMP cyclohydrolase. The phosphoribosyl-ATP pyrophosphohydrolase stretch occupies residues 115–203 (LYQLEQLLAE…VIENLRKRHQ (89 aa)).

In the N-terminal section; belongs to the PRA-CH family. The protein in the C-terminal section; belongs to the PRA-PH family.

It localises to the cytoplasm. The enzyme catalyses 1-(5-phospho-beta-D-ribosyl)-ATP + H2O = 1-(5-phospho-beta-D-ribosyl)-5'-AMP + diphosphate + H(+). It catalyses the reaction 1-(5-phospho-beta-D-ribosyl)-5'-AMP + H2O = 1-(5-phospho-beta-D-ribosyl)-5-[(5-phospho-beta-D-ribosylamino)methylideneamino]imidazole-4-carboxamide. It participates in amino-acid biosynthesis; L-histidine biosynthesis; L-histidine from 5-phospho-alpha-D-ribose 1-diphosphate: step 2/9. The protein operates within amino-acid biosynthesis; L-histidine biosynthesis; L-histidine from 5-phospho-alpha-D-ribose 1-diphosphate: step 3/9. In Escherichia coli (strain K12), this protein is Histidine biosynthesis bifunctional protein HisIE (hisI).